The sequence spans 448 residues: Endoglucanase (448 aa).

Positions 1–34 (MFSKIKKINFFKKTFSFLIAVVMMLFTVLGTNTY) are cleaved as a signal peptide. Residues H70, 74–75 (WY), Y101, and H137 contribute to the substrate site. E175 functions as the Proton donor in the catalytic mechanism. Position 237 (Y237) interacts with substrate. E263 acts as the Nucleophile in catalysis. Residues 269–270 (AS), W297, and 302–304 (KSE) each bind substrate.

This sequence belongs to the glycosyl hydrolase 5 (cellulase A) family.

The catalysed reaction is Endohydrolysis of (1-&gt;4)-beta-D-glucosidic linkages in cellulose, lichenin and cereal beta-D-glucans.. The sequence is that of Endoglucanase (eglA) from Clostridium saccharobutylicum.